We begin with the raw amino-acid sequence, 305 residues long: Putative E3 ubiquitin-protein ligase SINAT1 (305 aa).

The RING-type zinc-finger motif lies at 57 to 93 (CPVCTNLMYPPIHQCPNGHTLCSSCKLRVQNTCPTCR). The SBD stretch occupies residues 107–300 (VAESLEVPCR…EELKLRVTGR (194 aa)). The segment at 110-170 (SLEVPCRYQN…LVDHLKDDHK (61 aa)) adopts an SIAH-type zinc-finger fold. C115, C122, H134, C138, C145, C152, H164, and H169 together coordinate Zn(2+).

Belongs to the SINA (Seven in absentia) family. As to quaternary structure, interacts with SINAT6. Interacts with ATG6 and TRAF1A. Interacts with WAV3. Interacts with FREE1. Interacts with ELC/VPS23A.

The protein resides in the endosome. It is found in the multivesicular body. Its subcellular location is the cytoplasmic vesicle. The protein localises to the autophagosome. It catalyses the reaction S-ubiquitinyl-[E2 ubiquitin-conjugating enzyme]-L-cysteine + [acceptor protein]-L-lysine = [E2 ubiquitin-conjugating enzyme]-L-cysteine + N(6)-ubiquitinyl-[acceptor protein]-L-lysine.. It participates in protein modification; protein ubiquitination. In terms of biological role, E3 ubiquitin-protein ligase that mediates ubiquitination and subsequent proteasomal degradation of target proteins. E3 ubiquitin ligases accept ubiquitin from an E2 ubiquitin-conjugating enzyme in the form of a thioester and then directly transfers the ubiquitin to targeted substrates. It probably triggers the ubiquitin-mediated degradation of different substrates. Mediates the proteasomal-dependent degradation of ATG6, a component of the autophagosome complex. Requires TRAF1A/MUSE14 and TRAF1B/MUSE13 to target ATG6 for ubiquitination and subsequent regulation of autophagosome assembly. Modulates directly the ubiquitination and proteasomal-dependent degradation of FREE1, a component of the ESCRT-I complex. Modulates directly the ubiquitination and proteasomal-dependent degradation of ELC/VPS23A, a component of the ESCRT-I complex. This Arabidopsis thaliana (Mouse-ear cress) protein is Putative E3 ubiquitin-protein ligase SINAT1.